Here is a 398-residue protein sequence, read N- to C-terminus: Immunoglobulin heavy constant alpha 1 (398 aa).

The Extracellular portion of the chain corresponds to alanine 1–threonine 364. Residues proline 6–threonine 98 form the Ig-like 1 domain. Cystine bridges form between cysteine 26-cysteine 85 and cysteine 77-cysteine 101. Positions aspartate 96–cysteine 122 are disordered. Residues cysteine 101 to serine 119 show a composition bias toward pro residues. Serine 105 is a glycosylation site (O-linked (GalNAc...) serine). Residues threonine 106 and threonine 109 are each glycosylated (O-linked (GalNAc...) threonine). Residues serine 111 and serine 113 are each glycosylated (O-linked (GalNAc...) serine). Threonine 114 and threonine 117 each carry an O-linked (GalNAc...) threonine glycan. 2 O-linked (GalNAc...) serine glycosylation sites follow: serine 119 and serine 121. 3 cysteine pairs are disulfide-bonded: cysteine 123/cysteine 180, cysteine 147/cysteine 204, and cysteine 250/cysteine 313. Ig-like domains are found at residues proline 125 to serine 220 and proline 228 to aspartate 330. Asparagine 144 carries N-linked (GlcNAc...) (complex) asparagine glycosylation. An N-linked (GlcNAc...) (complex) asparagine glycan is attached at proline 340. Glutamate 352 is a 3-hydroxy-L-kynurenine binding site. A helical transmembrane segment spans residues isoleucine 365–valine 383. The Cytoplasmic segment spans residues threonine 384–tyrosine 398.

As to quaternary structure, immunoglobulins are composed of two identical heavy chains and two identical light chains; disulfide-linked. Monomeric or polymeric. Part of the secretory IgA (sIgA) complex that consists of two, four or five IgA monomers, and two additional non-Ig polypeptides, namely the JCHAIN and the secretory component (the proteolytic product of PIGR). Post-translationally, 3-Hydroxykynurenine, an oxidized tryptophan metabolite that is common in biological fluids, reacts with alpha-1-microglobulin to form heterogeneous polycyclic chromophores including hydroxanthommatin. The chromophore reacts with accessible cysteines forming non-reducible thioether cross-links with Ig alpha-1 chain C region Cys-352. N- and O-glycosylated. N-glycan at Asn-144: Hex5HexNAc4.

Its subcellular location is the secreted. It localises to the cell membrane. In terms of biological role, constant region of immunoglobulin heavy chains. Immunoglobulins, also known as antibodies, are membrane-bound or secreted glycoproteins produced by B lymphocytes. In the recognition phase of humoral immunity, the membrane-bound immunoglobulins serve as receptors which, upon binding of a specific antigen, trigger the clonal expansion and differentiation of B lymphocytes into immunoglobulins-secreting plasma cells. Secreted immunoglobulins mediate the effector phase of humoral immunity, which results in the elimination of bound antigens. The antigen binding site is formed by the variable domain of one heavy chain, together with that of its associated light chain. Thus, each immunoglobulin has two antigen binding sites with remarkable affinity for a particular antigen. The variable domains are assembled by a process called V-(D)-J rearrangement and can then be subjected to somatic hypermutations which, after exposure to antigen and selection, allow affinity maturation for a particular antigen. Ig alpha is the major immunoglobulin class in body secretions. The polypeptide is Immunoglobulin heavy constant alpha 1 (Homo sapiens (Human)).